Reading from the N-terminus, the 197-residue chain is UPF0319 protein VP0761 (197 aa).

Positions 1–20 (MKKTTTLLGICAILSAPAFA) are cleaved as a signal peptide.

Belongs to the UPF0319 family.

The chain is UPF0319 protein VP0761 from Vibrio parahaemolyticus serotype O3:K6 (strain RIMD 2210633).